Reading from the N-terminus, the 399-residue chain is Keratin, type I cytoskeletal 19 (399 aa).

The tract at residues 1 to 78 (MTSYSYRQSS…ATSDGLLAGN (78 aa)) is head. The residue at position 7 (R7) is an Omega-N-methylarginine. A phosphoserine mark is found at S14 and S22. Residue R24 is modified to Asymmetric dimethylarginine; alternate. The residue at position 24 (R24) is an Omega-N-methylarginine; alternate. Residue R32 is modified to Omega-N-methylarginine. Residues S35 and S40 each carry the phosphoserine modification. An omega-N-methylarginine mark is found at R43 and R51. 2 positions are modified to phosphoserine: S57 and S71. Positions 79 to 114 (EKLTMQNLNDRLASYLEKVRALEEANGDLEVKIRDW) are coil 1A. Residues 79-390 (EKLTMQNLND…NLLEGQDAYF (312 aa)) enclose the IF rod domain. The tract at residues 115 to 132 (YQKQGPGPARDYSHYFKT) is linker 1. Residues 133–224 (IEDLRDQILG…KNHEEEMSVL (92 aa)) form a coil 1B region. Residues 225-247 (KGQVGGQVSVEVDSAPGIDLAKI) form a linker 12 region. The tract at residues 243–389 (DLAKILSDMR…RNLLEGQDAY (147 aa)) is necessary for interaction with PNN. Residues 248-386 (LSDMRSQYEV…ATYRNLLEGQ (139 aa)) are coil 2. T322 bears the Phosphothreonine mark. A rod-like helical tail region spans residues 387–399 (DAYFNDLSLAKAL). Position 394 is a phosphoserine (S394).

This sequence belongs to the intermediate filament family. Heterotetramer of two type I and two type II keratins. Interacts with PNN and the actin-binding domain of DMD.

Involved in the organization of myofibers. Together with KRT8, helps to link the contractile apparatus to dystrophin at the costameres of striated muscle. In Bos taurus (Bovine), this protein is Keratin, type I cytoskeletal 19 (KRT19).